The sequence spans 472 residues: MSDTTAIANVFKLIEEYDIKFVLLRFTDIKGKEHGVSLPVNLVDEDLFEDGKMFDGSSVEGWKAINKADMLLMPMPETAVVDPFAQIPTLSLRCSIYEPSTMQSYDRDPRSIAIRAENYMRSTGIADEALFGPEPEFFLFDDVRFDVSMNRSSYSVDDIEAAWNTNKKYEDGNNAYRPLKKGGYCAVAPIDSAHDIRSEMCLILEEMGLVIEAHHHEVATAGQNEIATRFNTLTTKADETQIYKYVVQNVAYEHGKTACFMPKPITGDNGSGMHCNMSLSKDGKNVFQGDKYAGLSETALYYIGGIIKHAKALNAFTNPSTNSYKRLVPGFEAPVLLAYSASNRSASIRIPAVTNPKAIRIEARFPDPLANPYLAFAALLMAGLDGIINKIHPGDAMDKNLYDLPPEELQNIPAVASSLEEALNALEQDYEFLTKGNVFTQAFIDAFITIKRKEVERLNMTPHPVEFEMYYA.

The 85-residue stretch at 17 to 101 folds into the GS beta-grasp domain; it reads YDIKFVLLRF…LRCSIYEPST (85 aa). In terms of domain architecture, GS catalytic spans 109 to 472; sequence PRSIAIRAEN…HPVEFEMYYA (364 aa). 2 residues coordinate Mg(2+): glutamate 134 and glutamate 136. Residue glutamate 212 coordinates ATP. Mg(2+)-binding residues include glutamate 217 and glutamate 225. L-glutamate is bound by residues 269 to 270 and glycine 270; that span reads NG. Histidine 274 contributes to the Mg(2+) binding site. Residues 276–278 and serine 278 contribute to the ATP site; that span reads NMS. Residues arginine 326, glutamate 332, and arginine 344 each coordinate L-glutamate. ATP-binding residues include arginine 344, arginine 349, and lysine 357. Glutamate 362 is a Mg(2+) binding site. An L-glutamate-binding site is contributed by arginine 364. Tyrosine 402 carries the post-translational modification O-AMP-tyrosine.

This sequence belongs to the glutamine synthetase family. As to quaternary structure, oligomer of 12 subunits arranged in the form of two hexameric ring. Requires Mg(2+) as cofactor.

The protein localises to the cytoplasm. It carries out the reaction L-glutamate + NH4(+) + ATP = L-glutamine + ADP + phosphate + H(+). The activity of this enzyme could be controlled by adenylation under conditions of abundant glutamine. Catalyzes the ATP-dependent biosynthesis of glutamine from glutamate and ammonia. This Pasteurella multocida (strain Pm70) protein is Glutamine synthetase.